A 368-amino-acid polypeptide reads, in one-letter code: Cobalt-precorrin-5B C(1)-methyltransferase (368 aa).

The protein belongs to the CbiD family.

It carries out the reaction Co-precorrin-5B + S-adenosyl-L-methionine = Co-precorrin-6A + S-adenosyl-L-homocysteine. It functions in the pathway cofactor biosynthesis; adenosylcobalamin biosynthesis; cob(II)yrinate a,c-diamide from sirohydrochlorin (anaerobic route): step 6/10. Catalyzes the methylation of C-1 in cobalt-precorrin-5B to form cobalt-precorrin-6A. This is Cobalt-precorrin-5B C(1)-methyltransferase from Synechococcus sp. (strain CC9605).